Consider the following 246-residue polypeptide: MEDLDAYRAACANRIRRLERYKKARSFCSLETDEPTSSSPSLSSNSDVSQENGSSTFDMIREKMFSLMENDMTLLKQLLQLGDQISEIKKERLRRTMSQNSLEYDEEDEKEDKFDSGFSASMSAVTNLYVDDERPQFFSRQNSVLRIPIPPRSSNRFGPRRVIRRPSDILPRQQTNNIRTLHVNSDDSDSSSSGSKTHSPSSSVYNASTLILPSKTTKNRSSNSSIDSGIRDEQLTPSPTFESVVI.

Disordered regions lie at residues 29-54 (SLET…ENGS), 93-114 (LRRT…EDKF), and 148-246 (PIPP…SVVI). The span at 35–49 (PTSSSPSLSSNSDVS) shows a compositional bias: low complexity. Residues 172–183 (RQQTNNIRTLHV) are compositionally biased toward polar residues. 2 stretches are compositionally biased toward low complexity: residues 190–203 (SSSS…PSSS) and 214–225 (SKTTKNRSSNSS). N219 carries N-linked (GlcNAc...) asparagine glycosylation. A compositionally biased stretch (polar residues) spans 235–246 (LTPSPTFESVVI).

This is an uncharacterized protein from Caenorhabditis elegans.